Consider the following 287-residue polypeptide: MTLPASPPRYAVIGNPIAHSRSPQIHAMFSAQTGRPLRYERLLAPVDGFLPTVQAFRESGGLGLNVTVPFKLEAYALAEARLSERARLAGAVNTLSWRDGAWHGCNTDGVGLVNDLLRLGVALAGARVLLVGAGGAARGVLQPLAAAGCARIHIVNRTAARAAELAAAWRAAAPRTGTQVSAGALAQAAEPGGWDVAINATASGLQGAAPDLPGGLYAPDALAYDMMYGARPTAFMRQAEADGAARCADGLGMLVGQAAESFHIWHGVRPDPGPVLLALRTELLAAG.

Residues 20–22 (SRS) and Thr-67 contribute to the shikimate site. Lys-71 serves as the catalytic Proton acceptor. Glu-84 lines the NADP(+) pocket. Residues Asn-93 and Asp-108 each contribute to the shikimate site. NADP(+) contacts are provided by residues 132–136 (GAGGA), 156–161 (NRTAAR), and Met-226. Position 228 (Tyr-228) interacts with shikimate. Gly-250 contacts NADP(+).

The protein belongs to the shikimate dehydrogenase family. As to quaternary structure, homodimer.

It catalyses the reaction shikimate + NADP(+) = 3-dehydroshikimate + NADPH + H(+). The protein operates within metabolic intermediate biosynthesis; chorismate biosynthesis; chorismate from D-erythrose 4-phosphate and phosphoenolpyruvate: step 4/7. Its function is as follows. Involved in the biosynthesis of the chorismate, which leads to the biosynthesis of aromatic amino acids. Catalyzes the reversible NADPH linked reduction of 3-dehydroshikimate (DHSA) to yield shikimate (SA). This chain is Shikimate dehydrogenase (NADP(+)), found in Bordetella pertussis (strain Tohama I / ATCC BAA-589 / NCTC 13251).